The chain runs to 342 residues: Ribosomal RNA small subunit methyltransferase C (342 aa).

The protein belongs to the methyltransferase superfamily. RsmC family. In terms of assembly, monomer.

The protein localises to the cytoplasm. The enzyme catalyses guanosine(1207) in 16S rRNA + S-adenosyl-L-methionine = N(2)-methylguanosine(1207) in 16S rRNA + S-adenosyl-L-homocysteine + H(+). Functionally, specifically methylates the guanine in position 1207 of 16S rRNA in the 30S particle. The chain is Ribosomal RNA small subunit methyltransferase C from Cronobacter sakazakii (strain ATCC BAA-894) (Enterobacter sakazakii).